A 44-amino-acid polypeptide reads, in one-letter code: Large ribosomal subunit protein bL34 (44 aa).

Residues 1 to 26 (MKMTFQPKKRQRAKVHGFRQRMKTAG) form a disordered region. The segment covering 7–22 (PKKRQRAKVHGFRQRM) has biased composition (basic residues).

Belongs to the bacterial ribosomal protein bL34 family.

This chain is Large ribosomal subunit protein bL34, found in Agathobacter rectalis (strain ATCC 33656 / DSM 3377 / JCM 17463 / KCTC 5835 / VPI 0990) (Eubacterium rectale).